We begin with the raw amino-acid sequence, 207 residues long: Thaumatin-like protein 1 (207 aa).

8 cysteine pairs are disulfide-bonded: Cys9/Cys202, Cys50/Cys60, Cys65/Cys71, Cys117/Cys191, Cys122/Cys174, Cys130/Cys140, Cys144/Cys153, and Cys154/Cys161.

This sequence belongs to the thaumatin family. Monomer. Not glycosylated.

It is found in the secreted. Functionally, acidic thaumatin-like protein. Exhibits weak beta-1,3-glucanase activity with laminarin as substrate. In Manilkara zapota (Sapodilla plum), this protein is Thaumatin-like protein 1 (TLP1).